The sequence spans 294 residues: 2-dehydro-3-deoxy-phosphogluconate/2-dehydro-3-deoxy-6-phosphogalactonate aldolase (294 aa).

Substrate is bound by residues 43 to 44 (TT), 130 to 132 (YNY), and 155 to 157 (KDT). K155 acts as the Schiff-base intermediate with substrate in catalysis.

It belongs to the DapA family. KDPG aldolase subfamily. In terms of assembly, homotetramer; dimer of dimers.

It carries out the reaction 2-dehydro-3-deoxy-6-phospho-D-gluconate = D-glyceraldehyde 3-phosphate + pyruvate. It catalyses the reaction 2-dehydro-3-deoxy-6-phospho-D-galactonate = D-glyceraldehyde 3-phosphate + pyruvate. The protein operates within carbohydrate acid metabolism; 2-dehydro-3-deoxy-D-gluconate degradation; D-glyceraldehyde 3-phosphate and pyruvate from 2-dehydro-3-deoxy-D-gluconate: step 2/2. Its function is as follows. Involved in the degradation of glucose and galactose via the Entner-Doudoroff pathway. Catalyzes the reversible cleavage of 2-keto-3-deoxy-6-phosphogluconate (KDPG) and 2-keto-3-deoxygluconate (KDG) forming pyruvate and glyceraldehyde 3-phosphate or glyceraldehyde, respectively. It is also able to catalyze the reversible cleavage of 2-keto-3-deoxy-6-phosphogalactonate (KDPGal) and 2-keto-3-deoxygalactonate (KDGal). It is equally active with both D- and L-glyceraldehyde. This is 2-dehydro-3-deoxy-phosphogluconate/2-dehydro-3-deoxy-6-phosphogalactonate aldolase from Saccharolobus solfataricus (Sulfolobus solfataricus).